We begin with the raw amino-acid sequence, 695 residues long: MEKRNQKKRQQNAHLSCELCRERKVKCDKLDPCTNCASAGVVCVPVRRPRLPRGAHARRLRRISPEDPEASIRIDISPGAGTAADEDLKKRIRRLEALVDSMRSSASQSSNQDQESRDAIESISNETEDASAPTPDSSRMPLGDGGLRVLGLSGPSNLEIGWASIIEDKETTTQLCQVYLLNVDPVIKILHRPSVERWMLQGERYLGFPERHAAVESLGSAICYVAATSLTETQSWARFHATKSSIVARARRACEAALEKSSPLVSPEVTTLQAFVLYLVARRSEDPSRAVWTLMAFAVRIAKALDLPGGADETFFGQQMRKRLWLTICLLDFQTSLSQPSEPLISVVEATASFSPPRHINDSDFSLTTSHDIPDREGLTDTTFSMVSYHVQVAGRLLNFEPSVGDYETRQQHVQQFEQRTLRLLFYCDPESTPYAWFTWHRIQCFVSGARLSAVRPLRHPRGGSTSCMIPLTGTNESAGPLSLALNVLEKVQLVHTDPRGEGFRWFVTVPWRALAIAISECYVCQDRALMQRAWPIVEAAFQQHEAAVSGSSKAISTTLERMMCRIREKLSLTLGTSAITASPTFGITSIATTLSVPHTPPSQSSITSSGDLLSNWPWPATELSHPGPDLALVAGVAPISSSLPKLDPLLHSLDNQLVIAAQEPLVDADQSWAWEEVMASLHHDETIGADMFLS.

Residues 17–43 constitute a DNA-binding region (zn(2)-C6 fungal-type); that stretch reads CELCRERKVKCDKLDPCTNCASAGVVC. Residues 101–113 are compositionally biased toward low complexity; sequence SMRSSASQSSNQD. The segment at 101–146 is disordered; sequence SMRSSASQSSNQDQESRDAIESISNETEDASAPTPDSSRMPLGDGG.

Its subcellular location is the nucleus. Functionally, transcription factor that specifically regulates the neosartoricin B biosynthesis gene cluster. In Arthroderma otae (strain ATCC MYA-4605 / CBS 113480) (Microsporum canis), this protein is C6 finger domain transcription factor nscR.